Here is a 441-residue protein sequence, read N- to C-terminus: Cobyrinate a,c-diamide synthase (441 aa).

Residues 243-434 (TVAVADDAAF…AHVHPESTAF (192 aa)) form the GATase cobBQ-type domain. Residue C323 is the Nucleophile of the active site.

It belongs to the CobB/CbiA family. Requires Mg(2+) as cofactor.

It carries out the reaction cob(II)yrinate + 2 L-glutamine + 2 ATP + 2 H2O = cob(II)yrinate a,c diamide + 2 L-glutamate + 2 ADP + 2 phosphate + 2 H(+). The protein operates within cofactor biosynthesis; adenosylcobalamin biosynthesis; cob(II)yrinate a,c-diamide from sirohydrochlorin (anaerobic route): step 10/10. Functionally, catalyzes the ATP-dependent amidation of the two carboxylate groups at positions a and c of cobyrinate, using either L-glutamine or ammonia as the nitrogen source. The chain is Cobyrinate a,c-diamide synthase from Halobacterium salinarum (strain ATCC 700922 / JCM 11081 / NRC-1) (Halobacterium halobium).